The chain runs to 512 residues: Cobyric acid synthase (512 aa).

The 201-residue stretch at 251-451 (ALDIAVIRLP…IHGLFDSHHF (201 aa)) folds into the GATase cobBQ-type domain. The Nucleophile role is filled by Cys-332. His-443 is an active-site residue.

The protein belongs to the CobB/CobQ family. CobQ subfamily.

Its pathway is cofactor biosynthesis; adenosylcobalamin biosynthesis. In terms of biological role, catalyzes amidations at positions B, D, E, and G on adenosylcobyrinic A,C-diamide. NH(2) groups are provided by glutamine, and one molecule of ATP is hydrogenolyzed for each amidation. The chain is Cobyric acid synthase from Yersinia enterocolitica serotype O:8 / biotype 1B (strain NCTC 13174 / 8081).